Here is a 131-residue protein sequence, read N- to C-terminus: Small ribosomal subunit protein uS8 (131 aa).

This sequence belongs to the universal ribosomal protein uS8 family. As to quaternary structure, part of the 30S ribosomal subunit. Contacts proteins S5 and S12.

Functionally, one of the primary rRNA binding proteins, it binds directly to 16S rRNA central domain where it helps coordinate assembly of the platform of the 30S subunit. The protein is Small ribosomal subunit protein uS8 of Dechloromonas aromatica (strain RCB).